We begin with the raw amino-acid sequence, 134 residues long: Ribonuclease P protein component (134 aa).

This sequence belongs to the RnpA family. In terms of assembly, consists of a catalytic RNA component (M1 or rnpB) and a protein subunit.

It catalyses the reaction Endonucleolytic cleavage of RNA, removing 5'-extranucleotides from tRNA precursor.. RNaseP catalyzes the removal of the 5'-leader sequence from pre-tRNA to produce the mature 5'-terminus. It can also cleave other RNA substrates such as 4.5S RNA. The protein component plays an auxiliary but essential role in vivo by binding to the 5'-leader sequence and broadening the substrate specificity of the ribozyme. This is Ribonuclease P protein component from Ectopseudomonas mendocina (strain ymp) (Pseudomonas mendocina).